The sequence spans 404 residues: Tryptophan synthase beta chain (404 aa).

Lys-98 is modified (N6-(pyridoxal phosphate)lysine).

This sequence belongs to the TrpB family. Tetramer of two alpha and two beta chains. Pyridoxal 5'-phosphate is required as a cofactor.

It catalyses the reaction (1S,2R)-1-C-(indol-3-yl)glycerol 3-phosphate + L-serine = D-glyceraldehyde 3-phosphate + L-tryptophan + H2O. It participates in amino-acid biosynthesis; L-tryptophan biosynthesis; L-tryptophan from chorismate: step 5/5. In terms of biological role, the beta subunit is responsible for the synthesis of L-tryptophan from indole and L-serine. The chain is Tryptophan synthase beta chain from Rhodopseudomonas palustris (strain BisB5).